We begin with the raw amino-acid sequence, 668 residues long: DNA ligase (668 aa).

NAD(+)-binding positions include 32–36 (DAEYD), 81–82 (SL), and Glu-113. The N6-AMP-lysine intermediate role is filled by Lys-115. The NAD(+) site is built by Arg-136, Glu-173, Lys-289, and Lys-313. Residues Cys-407, Cys-410, Cys-425, and Cys-431 each coordinate Zn(2+). Residues 590-668 (ASEQPFAGKT…EEELQQALQG (79 aa)) form the BRCT domain.

This sequence belongs to the NAD-dependent DNA ligase family. LigA subfamily. Mg(2+) is required as a cofactor. Requires Mn(2+) as cofactor.

It carries out the reaction NAD(+) + (deoxyribonucleotide)n-3'-hydroxyl + 5'-phospho-(deoxyribonucleotide)m = (deoxyribonucleotide)n+m + AMP + beta-nicotinamide D-nucleotide.. In terms of biological role, DNA ligase that catalyzes the formation of phosphodiester linkages between 5'-phosphoryl and 3'-hydroxyl groups in double-stranded DNA using NAD as a coenzyme and as the energy source for the reaction. It is essential for DNA replication and repair of damaged DNA. In Aeromonas hydrophila subsp. hydrophila (strain ATCC 7966 / DSM 30187 / BCRC 13018 / CCUG 14551 / JCM 1027 / KCTC 2358 / NCIMB 9240 / NCTC 8049), this protein is DNA ligase.